Here is a 551-residue protein sequence, read N- to C-terminus: Methyl-accepting chemotaxis protein I (551 aa).

Residues 1–6 (MLKRIK) lie on the Cytoplasmic side of the membrane. A helical transmembrane segment spans residues 7 to 30 (IVTSLLLVLAVFGLLQLTSGGLFF). Residues 31-190 (NALKNDKENF…AVSDNNASYS (160 aa)) lie on the Periplasmic side of the membrane. The interval 64–73 (RNTLNRAGIR) is the 3 Arg may form a positively charged pocket, which binds the alpha-carboxyl group of the attractant AA. A helical transmembrane segment spans residues 191–210 (QAMWILVGVMIVVLAVIFAV). Topologically, residues 211-551 (WFGIKASLVA…ADSEENWETF (341 aa)) are cytoplasmic. The HAMP domain occupies 216-268 (ASLVAPMNRLIDSIRHIAGGDLVKPIEVDGSNEMGQLAESLRHMQGELMRTVG). The 230-residue stretch at 273–502 (GANAIYSGAS…ESAAAAAALE (230 aa)) folds into the Methyl-accepting transducer domain. The residue at position 297 (Gln297) is a Glutamate methyl ester (Gln). Glu304 bears the Glutamate methyl ester (Glu) mark. Gln311 is subject to Glutamate methyl ester (Gln). A glutamate methyl ester (Glu) mark is found at Glu493 and Glu502.

This sequence belongs to the methyl-accepting chemotaxis (MCP) protein family.

It localises to the cell inner membrane. In terms of biological role, receptor for the attractant L-serine and related amino acids. Is also responsible for chemotaxis away from a wide range of repellents, including leucine, indole, and weak acids. Functionally, chemotactic-signal transducers respond to changes in the concentration of attractants and repellents in the environment, transduce a signal from the outside to the inside of the cell, and facilitate sensory adaptation through the variation of the level of methylation. Attractants increase the level of methylation while repellents decrease the level of methylation, the methyl groups are added by the methyltransferase CheR and removed by the methylesterase CheB. This is Methyl-accepting chemotaxis protein I (tsr) from Escherichia coli (strain K12).